The primary structure comprises 368 residues: Probable leucine aminopeptidase TRV_05750 (368 aa).

Positions 1 to 18 (MKVFAIAAVAALTAVAVA) are cleaved as a signal peptide. An N-linked (GlcNAc...) asparagine glycan is attached at Asn92. Zn(2+) contacts are provided by His172 and Asp191. N-linked (GlcNAc...) asparagine glycosylation is found at Asn192 and Asn216. Glu230 and Asp257 together coordinate Zn(2+). Cys301 and Cys305 are joined by a disulfide. His334 is a binding site for Zn(2+).

This sequence belongs to the peptidase M28 family. M28E subfamily. Monomer. The cofactor is Zn(2+).

It localises to the secreted. Functionally, probable extracellular aminopeptidase which contributes to pathogenicity. This Trichophyton verrucosum (strain HKI 0517) protein is Probable leucine aminopeptidase TRV_05750.